Here is a 183-residue protein sequence, read N- to C-terminus: Adenine phosphoribosyltransferase (183 aa).

Belongs to the purine/pyrimidine phosphoribosyltransferase family. As to quaternary structure, homodimer.

The protein resides in the cytoplasm. It catalyses the reaction AMP + diphosphate = 5-phospho-alpha-D-ribose 1-diphosphate + adenine. It functions in the pathway purine metabolism; AMP biosynthesis via salvage pathway; AMP from adenine: step 1/1. In terms of biological role, catalyzes a salvage reaction resulting in the formation of AMP, that is energically less costly than de novo synthesis. This chain is Adenine phosphoribosyltransferase, found in Shewanella pealeana (strain ATCC 700345 / ANG-SQ1).